The chain runs to 288 residues: 33 kDa chaperonin (288 aa).

Cystine bridges form between Cys236–Cys238 and Cys269–Cys272.

This sequence belongs to the HSP33 family. In terms of processing, under oxidizing conditions two disulfide bonds are formed involving the reactive cysteines. Under reducing conditions zinc is bound to the reactive cysteines and the protein is inactive.

It localises to the cytoplasm. Functionally, redox regulated molecular chaperone. Protects both thermally unfolding and oxidatively damaged proteins from irreversible aggregation. Plays an important role in the bacterial defense system toward oxidative stress. The sequence is that of 33 kDa chaperonin from Syntrophotalea carbinolica (strain DSM 2380 / NBRC 103641 / GraBd1) (Pelobacter carbinolicus).